The chain runs to 708 residues: Glycogen [starch] synthase isoform 1 (708 aa).

R20 serves as a coordination point for UDP. Residue S159 is modified to Phosphoserine. Residues H193 and R199 each contribute to the UDP-alpha-D-glucose site. Alpha-D-glucose 6-phosphate-binding residues include H280, E281, Q283, H286, and K290. Residue R320 participates in UDP binding. R320 lines the UDP-alpha-D-glucose pocket. A Phosphoserine modification is found at S363. An alpha-D-glucose 6-phosphate-binding site is contributed by H500. Positions 509, 511, and 512 each coordinate UDP-alpha-D-glucose. T514 serves as a coordination point for UDP. A Phosphoserine modification is found at S560. The alpha-D-glucose 6-phosphate site is built by R583 and R587. Phosphoserine is present on residues S651 and S655. Phosphoserine; by PKA is present on residues S660 and S662. Residues 687 to 708 (STNGAIDNDDDDNDTSAYYEDN) are disordered. The segment covering 693–708 (DNDDDDNDTSAYYEDN) has biased composition (acidic residues).

The protein belongs to the glycosyltransferase 3 family.

The catalysed reaction is [(1-&gt;4)-alpha-D-glucosyl](n) + UDP-alpha-D-glucose = [(1-&gt;4)-alpha-D-glucosyl](n+1) + UDP + H(+). Its pathway is glycan biosynthesis; glycogen biosynthesis. With respect to regulation, allosteric activation by glucose-6-phosphate, and phosphorylation by a cAMP-dependent kinase. Functionally, glycogen synthase participates in the glycogen biosynthetic process along with glycogenin and glycogen branching enzyme. Extends the primer composed of a few glucose units formed by glycogenin by adding new glucose units to it. In this context, glycogen synthase transfers the glycosyl residue from UDP-Glc to the non-reducing end of alpha-1,4-glucan. This chain is Glycogen [starch] synthase isoform 1 (GSY1), found in Saccharomyces cerevisiae (strain ATCC 204508 / S288c) (Baker's yeast).